We begin with the raw amino-acid sequence, 261 residues long: Shikimate dehydrogenase (NADP(+)) (261 aa).

Shikimate is bound by residues 13–15 and Thr60; that span reads SLS. Lys64 serves as the catalytic Proton acceptor. An NADP(+)-binding site is contributed by Glu76. The shikimate site is built by Asn85 and Asp100. NADP(+) is bound by residues 122–126, 143–148, and Ile203; these read GAGGA and NRTVER. Tyr205 lines the shikimate pocket. Residue Gly226 participates in NADP(+) binding.

It belongs to the shikimate dehydrogenase family. In terms of assembly, homodimer.

It carries out the reaction shikimate + NADP(+) = 3-dehydroshikimate + NADPH + H(+). It functions in the pathway metabolic intermediate biosynthesis; chorismate biosynthesis; chorismate from D-erythrose 4-phosphate and phosphoenolpyruvate: step 4/7. In terms of biological role, involved in the biosynthesis of the chorismate, which leads to the biosynthesis of aromatic amino acids. Catalyzes the reversible NADPH linked reduction of 3-dehydroshikimate (DHSA) to yield shikimate (SA). This chain is Shikimate dehydrogenase (NADP(+)), found in Exiguobacterium sp. (strain ATCC BAA-1283 / AT1b).